The chain runs to 337 residues: Protein-methionine-sulfoxide reductase catalytic subunit MsrP (337 aa).

Positions 1–54 form a signal peptide, tat-type signal; that stretch reads MLIKLPRSSECKASEITPEGIYLSRRTLLGGSLAGLALGALPGGVGAAQMSRYA. Mo-molybdopterin is bound by residues Asn-94, 97-98, Cys-152, Thr-187, Asn-237, Arg-242, and 253-255; these read YE and SIK.

The protein belongs to the MsrP family. In terms of assembly, heterodimer of a catalytic subunit (MsrP) and a heme-binding subunit (MsrQ). Mo-molybdopterin is required as a cofactor. In terms of processing, predicted to be exported by the Tat system. The position of the signal peptide cleavage has not been experimentally proven.

It is found in the periplasm. It catalyses the reaction L-methionyl-[protein] + a quinone + H2O = L-methionyl-(S)-S-oxide-[protein] + a quinol. The catalysed reaction is L-methionyl-[protein] + a quinone + H2O = L-methionyl-(R)-S-oxide-[protein] + a quinol. Functionally, part of the MsrPQ system that repairs oxidized periplasmic proteins containing methionine sulfoxide residues (Met-O), using respiratory chain electrons. Thus protects these proteins from oxidative-stress damage caused by reactive species of oxygen and chlorine generated by the host defense mechanisms. MsrPQ is essential for the maintenance of envelope integrity under bleach stress, rescuing a wide series of structurally unrelated periplasmic proteins from methionine oxidation. The catalytic subunit MsrP is non-stereospecific, being able to reduce both (R-) and (S-) diastereoisomers of methionine sulfoxide. This Pseudomonas putida (strain ATCC 47054 / DSM 6125 / CFBP 8728 / NCIMB 11950 / KT2440) protein is Protein-methionine-sulfoxide reductase catalytic subunit MsrP.